Consider the following 181-residue polypeptide: ADP-ribosylation factor 1 (181 aa).

The N-myristoyl glycine moiety is linked to residue glycine 2. GTP is bound by residues 24–31, 67–71, and 126–129; these read GLDAAGKT, DVGGQ, and NKQD.

This sequence belongs to the small GTPase superfamily. Arf family. As to expression, seedling shoots.

It localises to the golgi apparatus. The enzyme catalyses GTP + H2O = GDP + phosphate + H(+). Functionally, GTP-binding protein involved in protein trafficking; may modulate vesicle budding and uncoating within the Golgi apparatus. In Oryza sativa subsp. japonica (Rice), this protein is ADP-ribosylation factor 1.